The chain runs to 330 residues: Cytoskeleton protein RodZ (330 aa).

Topologically, residues 1 to 111 (MNTEATQDHQ…LGKRRKKRDG (111 aa)) are cytoplasmic. One can recognise an HTH cro/C1-type domain in the interval 19–71 (LRHAREQLGLSQQAVAERLCLKVSTVRDIEDDKAPADLASTFLRGYIRSYARL). A DNA-binding region (H-T-H motif) is located at residues 30 to 49 (QQAVAERLCLKVSTVRDIED). Residues 112–132 (WLMSFTWLVLFVVIGLSGAWW) traverse the membrane as a helical; Signal-anchor for type II membrane protein segment. Residues 133–330 (WQDHKAQQEE…TLNAEQSPAQ (198 aa)) are Periplasmic-facing. Residues 146–166 (MADQSSAELNGGDANSQNVPL) are compositionally biased toward polar residues. The disordered stretch occupies residues 146–237 (MADQSSAELN…ASPLPTDQAN (92 aa)). Low complexity-rich tracts occupy residues 176 to 202 (TDSAANSAPTDTASTPTTSAPAQTPAD) and 216 to 233 (TAGTAPTTPATPASPLPT).

Belongs to the RodZ family.

It is found in the cell inner membrane. Its function is as follows. Cytoskeletal protein that is involved in cell-shape control through regulation of the length of the long axis. The chain is Cytoskeleton protein RodZ from Klebsiella pneumoniae (strain 342).